Here is a 432-residue protein sequence, read N- to C-terminus: Homogentisate 1,2-dioxygenase (432 aa).

H286 acts as the Proton acceptor in catalysis. Fe cation contacts are provided by H329 and E335. The homogentisate site is built by Y344 and H365. H365 provides a ligand contact to Fe cation.

The protein belongs to the homogentisate dioxygenase family. Hexamer; dimer of trimers. Requires Fe cation as cofactor.

It catalyses the reaction homogentisate + O2 = 4-maleylacetoacetate + H(+). Its pathway is amino-acid degradation; L-phenylalanine degradation; acetoacetate and fumarate from L-phenylalanine: step 4/6. In terms of biological role, involved in the catabolism of homogentisate (2,5-dihydroxyphenylacetate or 2,5-OH-PhAc), a central intermediate in the degradation of phenylalanine and tyrosine. Catalyzes the oxidative ring cleavage of the aromatic ring of homogentisate to yield maleylacetoacetate. This Bordetella pertussis (strain Tohama I / ATCC BAA-589 / NCTC 13251) protein is Homogentisate 1,2-dioxygenase.